The chain runs to 278 residues: Protein MGF 505-3R (278 aa).

The protein belongs to the asfivirus MGF 505 family.

Plays a role in virus cell tropism, and may be required for efficient virus replication in macrophages. The chain is Protein MGF 505-3R from African swine fever virus (isolate Tick/Malawi/Lil 20-1/1983) (ASFV).